Reading from the N-terminus, the 464-residue chain is ATP-dependent protease ATPase subunit HslU (464 aa).

ATP contacts are provided by residues Val-18, Gly-60–Glu-65, Asp-277, Glu-342, and Arg-414.

It belongs to the ClpX chaperone family. HslU subfamily. In terms of assembly, a double ring-shaped homohexamer of HslV is capped on each side by a ring-shaped HslU homohexamer. The assembly of the HslU/HslV complex is dependent on binding of ATP.

Its subcellular location is the cytoplasm. Functionally, ATPase subunit of a proteasome-like degradation complex; this subunit has chaperone activity. The binding of ATP and its subsequent hydrolysis by HslU are essential for unfolding of protein substrates subsequently hydrolyzed by HslV. HslU recognizes the N-terminal part of its protein substrates and unfolds these before they are guided to HslV for hydrolysis. The chain is ATP-dependent protease ATPase subunit HslU from Lactobacillus delbrueckii subsp. bulgaricus (strain ATCC 11842 / DSM 20081 / BCRC 10696 / JCM 1002 / NBRC 13953 / NCIMB 11778 / NCTC 12712 / WDCM 00102 / Lb 14).